The following is a 542-amino-acid chain: Cytochrome P450 monooxygenase sdnH (542 aa).

A helical membrane pass occupies residues 25–45; the sequence is LYVAGGILGAFTVYSIILVVY. The segment at 141–160 is disordered; it reads IIPPRGLGQEDSIGSTRSHD. Residues 340–360 traverse the membrane as a helical segment; that stretch reads FMGAGTYPTAATLIFVAYYIL. Cys-483 is a heme binding site. N-linked (GlcNAc...) asparagine glycosylation is present at Asn-506.

This sequence belongs to the cytochrome P450 family. Requires heme as cofactor.

The protein resides in the membrane. It participates in antibiotic biosynthesis. Cytochrome P450 monooxygenase; part of the gene cluster that mediates the biosynthesis of sordarin and hypoxysordarin, glycoside antibiotics with a unique tetracyclic diterpene aglycone structure. First, the geranylgeranyl diphosphate synthase sdnC constructs GGDP from farnesyl diphosphate and isopentenyl diphosphate. The diterpene cyclase sdnA then catalyzes the cyclization of GGDP to afford cycloaraneosene. Cycloaraneosene is then hydroxylated four times by the putative cytochrome P450 monooxygenases sdnB, sdnE, sdnF and sdnH to give a hydroxylated cycloaraneosene derivative such as cycloaraneosene-8,9,13,19-tetraol. Although the order of the hydroxylations is unclear, at least C8, C9 and C13 of the cycloaraneosene skeleton are hydroxylated before the sordaricin formation. Dehydration of the 13-hydroxy group of the hydroxylated cycloaraneosene derivative might be catalyzed by an unassigned hypothetical protein such as sdnG and sdnP to construct the cyclopentadiene moiety. The FAD-dependent oxidoreductase sdnN is proposed to catalyze the oxidation at C9 of the hydroxylated cycloaraneosene derivative and also catalyze the Baeyer-Villiger oxidation to give the lactone intermediate. The presumed lactone intermediate would be hydrolyzed to give an acrolein moiety and a carboxylate moiety. Then, [4+2]cycloaddition would occur between the acrolein moiety and the cyclopentadiene moiety to give sordaricin. SdnN might also be involved in the [4+2]cycloaddition after the hypothesized oxidation to accommodate the oxidized product and prompt the [4+2]cycloaddition. GDP-6-deoxy-D-altrose may be biosynthesized from GDP-D-mannose by the putative GDP-mannose-4,6-dehydratase sdnI and the short-chain dehydrogenase sdnK. The glycosyltransferase sdnJ catalyzes the attachment of 6-deoxy-D-altrose onto the 19-hydroxy group of sordaricin to give 4'-O-demethylsordarin. The methyltransferase sdnD would complete the biosynthesis of sordarin. Sordarin can be further modified into hypoxysordarin. The unique acyl chain at the 3'-hydroxy group of hypoxysordarin would be constructed by an iterative type I PKS sdnO and the trans-acting polyketide methyltransferase sdnL. SdnL would be responsible for the introduction of an alpha-methyl group of the polyketide chain. Alternatively, the beta-lactamase-like protein sdnR might be responsible for the cleavage and transfer of the polyketide chain from the PKS sdnO to sordarin. Two putative cytochrome P450 monooxygenases, sdnQ and sdnT, might catalyze the epoxidations of the polyketide chain to complete the biosynthesis of hypoxysordarin. Transcriptional regulators sdnM and sdnS are presumably encoded for the transcriptional regulation of the expression of the sdn gene cluster. This is Cytochrome P450 monooxygenase sdnH from Sordaria araneosa (Pleurage araneosa).